The sequence spans 534 residues: Cytochalasin cluster regulator ccsR (534 aa).

Residues 13–54 (CDRCRRQKLRCVRPLKHGACEHPNNIEALEPCERCSRAGTPC) constitute a DNA-binding region (zn(2)-C6 fungal-type). Disordered regions lie at residues 88–170 (IPKQ…LDAP) and 350–378 (TSAR…SAAS). Residues 109–125 (TGQNKGINDANAVTGSL) are compositionally biased toward polar residues. Residues 130 to 146 (PDHRSGSNVHRQPEARP) are compositionally biased toward basic and acidic residues. Positions 361–378 (DMCASSSNRDSSDLSAAS) are enriched in low complexity.

The protein resides in the nucleus. Its function is as follows. Transcription factor involved in regulation of gene cluster that mediates the biosynthesis of the mycotoxins cytochalasins E and K. This chain is Cytochalasin cluster regulator ccsR, found in Aspergillus clavatus (strain ATCC 1007 / CBS 513.65 / DSM 816 / NCTC 3887 / NRRL 1 / QM 1276 / 107).